The primary structure comprises 471 residues: Major facilitator-type transporter psiT1 (471 aa).

Positions 1–36 (MNPTTATDAHERTSLLSGRPQSAANSTAPYERQVQP) are disordered. Residues 14–36 (SLLSGRPQSAANSTAPYERQVQP) are compositionally biased toward polar residues. An N-linked (GlcNAc...) asparagine glycan is attached at Asn-25. Transmembrane regions (helical) follow at residues 44–64 (TPVT…TMVI), 108–128 (AIMV…GTGI), 140–160 (PVLM…LTVQ), 168–188 (LVTF…TTVF), 212–232 (GWLV…TTFL), 237–257 (AVYI…AFVL), 322–342 (LHSF…LIFF), and 356–376 (VMTT…PLFI). The N-linked (GlcNAc...) asparagine glycan is linked to Asn-384. The chain crosses the membrane as a helical span at residues 424-444 (VHITVISWTIESLAYIVLGTV).

The protein belongs to the major facilitator superfamily. TCR/Tet family.

It localises to the membrane. In terms of biological role, major facilitator-type transporter; part of the gene cluster that mediates the biosynthesis of psilocybin, a psychotropic tryptamine-derived natural product. This chain is Major facilitator-type transporter psiT1, found in Psilocybe cyanescens.